We begin with the raw amino-acid sequence, 789 residues long: Probable phosphoketolase 1 (789 aa).

It belongs to the XFP family. The cofactor is thiamine diphosphate.

This Rhizobium meliloti (strain 1021) (Ensifer meliloti) protein is Probable phosphoketolase 1.